Consider the following 151-residue polypeptide: Monooxygenase nsrQ (151 aa).

Belongs to the avfA family.

Its pathway is secondary metabolite biosynthesis. Functionally, monooxygenase; part of the gene cluster that mediates the biosynthesis of the tetrahydroxanthone dimer neosartorin, which exhibits antibacterial activity. The two different monomeric units appear to be synthesized by the same set of enzymes, among which the Baeyer-Villiger monooxygenase nsrF is the key enzyme for the divergence of the biosynthetic routes. The pathway begins with the synthesis of atrochrysone thioester by the polyketide synthase nsrB. The atrochrysone carboxyl ACP thioesterase nsrC then breaks the thioester bond and releases the atrochrysone carboxylic acid from AacuL. Atrochrysone carboxylic acid is decarboxylated by the decarboxylase nsrE, and oxidized by the anthrone oxygenase nsrD to yield emodin. Emodin is then reduced to emodin hydroquinone by the oxidoreductase nsrR. A-ring reduction by the short chain dehydrogenase nsrJ, dehydration by the scytalone dehydratase-like protein nsrI and probable spontaneous re-oxidation, results in overall deoxygenation to chrysophanol. The Baeyer-Villiger monooxygenase nsrF accepts chrysophanol as a substrate to insert one oxygen atom at two different positions to yield the precursors of both monomric units. NsrF is promiscuous/flexible in interacting with the 2 (non methylated and methylated) aromatic rings of chrysophanol, thus diverging the biosynthetic pathway at this point. After the hydrolysis of the lactones, methylesterification by the methyltransferase nsrG yields respectively moniliphenone and 2,2',6'-trihydroxy-4-methyl-6-methoxya-cyldiphenylmethanone. The next steps are the hydroxylation by the FAD-dependent monooxygenase nsrK, followed by isomerization by the monooxygenase nsrQ. The short chain dehydrogenase/reductase nsrO then catalyzes the C-5 ketoreduction to give the xanthone skeleton of blennolide C and 5-acetylblennolide A. The acetyltransferase nsrL has a strict substrate specificity and uses only blennolide A but not blennolide C to yield 5-acetylblennolide A as the single-acetylated product. In the final step of the biosynthesis, the heterodimerization of the 2 xanthones, blennolide C and 5-acetylblennolide A, is catalyzed by the cytochrome P450 monooxygenase nsrP. NsrP can utilize at least three different xanthones as its substrates to perform the dimerization reaction. The protein is Monooxygenase nsrQ of Aspergillus novofumigatus (strain IBT 16806).